The sequence spans 664 residues: DNA mismatch repair protein MutL (664 aa).

The protein belongs to the DNA mismatch repair MutL/HexB family.

Its function is as follows. This protein is involved in the repair of mismatches in DNA. It is required for dam-dependent methyl-directed DNA mismatch repair. May act as a 'molecular matchmaker', a protein that promotes the formation of a stable complex between two or more DNA-binding proteins in an ATP-dependent manner without itself being part of a final effector complex. The protein is DNA mismatch repair protein MutL of Clostridium beijerinckii (strain ATCC 51743 / NCIMB 8052) (Clostridium acetobutylicum).